Reading from the N-terminus, the 647-residue chain is Chaperone protein DnaK (647 aa).

Phosphothreonine; by autocatalysis is present on T198. The tract at residues G606–V634 is disordered. The segment covering N615–N628 has biased composition (polar residues).

It belongs to the heat shock protein 70 family.

In terms of biological role, acts as a chaperone. In Psychrobacter cryohalolentis (strain ATCC BAA-1226 / DSM 17306 / VKM B-2378 / K5), this protein is Chaperone protein DnaK.